Consider the following 429-residue polypeptide: Enolase (429 aa).

A (2R)-2-phosphoglycerate-binding site is contributed by Gln-163. Glu-205 functions as the Proton donor in the catalytic mechanism. 3 residues coordinate Mg(2+): Asp-242, Glu-287, and Asp-314. Positions 339, 368, 369, and 390 each coordinate (2R)-2-phosphoglycerate. Lys-339 serves as the catalytic Proton acceptor.

Belongs to the enolase family. The cofactor is Mg(2+).

The protein resides in the cytoplasm. The protein localises to the secreted. Its subcellular location is the cell surface. It catalyses the reaction (2R)-2-phosphoglycerate = phosphoenolpyruvate + H2O. The protein operates within carbohydrate degradation; glycolysis; pyruvate from D-glyceraldehyde 3-phosphate: step 4/5. Its function is as follows. Catalyzes the reversible conversion of 2-phosphoglycerate (2-PG) into phosphoenolpyruvate (PEP). It is essential for the degradation of carbohydrates via glycolysis. The sequence is that of Enolase from Anaeromyxobacter sp. (strain Fw109-5).